Consider the following 871-residue polypeptide: CRISPR system Cmr subunit Cmr2 (871 aa).

The interval 1–215 (MVNIKEKLFV…THLDLTSALS (215 aa)) is not required for target RNA cleavage. The Mn(2+) site is built by histidine 13, aspartate 14, and histidine 25. Residues cysteine 448, cysteine 451, cysteine 478, and cysteine 481 each coordinate Zn(2+). The GGDEF domain maps to 592-752 (KYYAILVMDG…GKDTLAIGLL (161 aa)). Mn(2+)-binding residues include aspartate 600, glutamate 656, aspartate 673, aspartate 674, glutamate 694, and glutamate 700.

Belongs to the CRISPR system Cmr2 family. Part of the type III-B Cmr ribonucleoprotein (RNP) complex, an elongated RNP with Cmr2 and Cmr3 as the base, with Cmr4 and Cmr5 forming a helical core along the mature crRNA (39 or 45 nt in length), while the complex is capped by Cmr6 and Cmr1. The 5' end of the crRNA is bound to Cmr2 and Cmr3, while Cmr6 and a Cmr1 subunit (Cmr1-1 or Cmr1-2) cap the 3' end of the crRNA. The target RNA lies antiparallel to the crRNA, with its 5' end near Cmr1 and Cmr6 and its 3' end near Cmr2 and Cmr3; major target cleavage occurs nears the junction of Cmr1/Cmr6 and Cmr4/Cmr, with minor cleavage occurring at 6 nt intervals which coincide with the proposed spacing of Cmr4 subunits. Forms a 1:1 complex with Cmr3. The Cmr2-Cmr3 complex non-specifically binds ss-target RNA and crRNA. Interacts with Cmr3, Cmr4 and Cmr5. The cofactor is Ca(2+). Requires Mn(2+) as cofactor. Zn(2+) serves as cofactor.

Its subcellular location is the cytoplasm. In terms of biological role, CRISPR (clustered regularly interspaced short palindromic repeat), is an adaptive immune system that provides protection against mobile genetic elements (viruses, transposable elements and conjugative plasmids). CRISPR clusters contain sequences complementary to antecedent mobile elements and target invading nucleic acids. CRISPR clusters are transcribed and processed into CRISPR RNA (crRNA), formerly called psiRNA (prokaryotic silencing) in this organism. Part of the Cmr ribonucleoprotein complex which has divalent cation-dependent endoribonuclease activity specific for ssRNA complementary to the crRNA (target RNA), generating 5' hydroxy- and 3' phosphate or 2'-3' cyclic phosphate termini. Cmr4 is probably the subunit that cleaves target RNA. Cmr complex does not cleave ssDNA complementary to the crRNA. Cleavage of target RNA is guided by the crRNA; substrate cleavage occurs a fixed distance (14 nt) from the 3' end of the crRNA. In vitro reconstitution shows Cmr1-2 and Cmr5 are not absolutely necessary for target cleavage. In Pyrococcus furiosus (strain ATCC 43587 / DSM 3638 / JCM 8422 / Vc1), this protein is CRISPR system Cmr subunit Cmr2.